The sequence spans 243 residues: Ornithine decarboxylase antizyme 3 (243 aa).

Phosphoserine is present on residues S6, S9, and S12.

This sequence belongs to the ODC antizyme family. Interacts with ODC1 and thereby sterically blocks ODC homodimerization. Interacts with AZIN2; this interaction disrupts the interaction between the antizyme and ODC1. Interacts with GGN. Isoform 2 interacts with PPP1R16A; Modulates PPP1CB activity. In terms of tissue distribution, testis-specific. Isoform 2 is expressed in outer dense fibers, fibrous sheath and the connecting piece of sperm.

It is found in the nucleus. It localises to the cytoplasm. The protein resides in the cell projection. The protein localises to the cilium. Its subcellular location is the flagellum. In terms of biological role, ornithine decarboxylase (ODC) antizyme protein that negatively regulates ODC activity and intracellular polyamine biosynthesis and uptake in response to increased intracellular polyamine levels. Binds to ODC monomers, inhibiting the assembly of the functional ODC homodimers. Does not target the ODC monomers for degradation, which allows a protein synthesis-independent restoration of ODC activity. Stabilizes AZIN2 by interfering with its ubiquitination. Involved in the translocation of AZNI2 from ER-Golgi intermediate compartment (ERGIC) to the cytosol. Probably plays a key role in spermatogenesis by regulating the intracellular concentration of polyamines in haploid germ cells. Its function is as follows. Does not possess antizyme activity. Modulates PPP1CB activity through its interaction with PPP1R16A. This Rattus norvegicus (Rat) protein is Ornithine decarboxylase antizyme 3.